Here is a 213-residue protein sequence, read N- to C-terminus: ATP-dependent dethiobiotin synthetase BioD 2 (213 aa).

Position 13-18 (13-18 (DIGKTI)) interacts with ATP. Thr-17 lines the Mg(2+) pocket. Residue Lys-38 is part of the active site. Thr-42 serves as a coordination point for substrate. ATP contacts are provided by residues Asp-50 and 115–118 (EGAG). Asp-50 and Glu-115 together coordinate Mg(2+).

It belongs to the dethiobiotin synthetase family. In terms of assembly, homodimer. Requires Mg(2+) as cofactor.

It localises to the cytoplasm. It carries out the reaction (7R,8S)-7,8-diammoniononanoate + CO2 + ATP = (4R,5S)-dethiobiotin + ADP + phosphate + 3 H(+). Its pathway is cofactor biosynthesis; biotin biosynthesis; biotin from 7,8-diaminononanoate: step 1/2. In terms of biological role, catalyzes a mechanistically unusual reaction, the ATP-dependent insertion of CO2 between the N7 and N8 nitrogen atoms of 7,8-diaminopelargonic acid (DAPA, also called 7,8-diammoniononanoate) to form a ureido ring. The chain is ATP-dependent dethiobiotin synthetase BioD 2 from Pasteurella multocida (strain Pm70).